A 246-amino-acid chain; its full sequence is tRNA (guanine-N(1)-)-methyltransferase (246 aa).

S-adenosyl-L-methionine contacts are provided by residues Gly113 and Leu132 to Val137.

This sequence belongs to the RNA methyltransferase TrmD family. As to quaternary structure, homodimer.

The protein resides in the cytoplasm. The enzyme catalyses guanosine(37) in tRNA + S-adenosyl-L-methionine = N(1)-methylguanosine(37) in tRNA + S-adenosyl-L-homocysteine + H(+). Functionally, specifically methylates guanosine-37 in various tRNAs. The polypeptide is tRNA (guanine-N(1)-)-methyltransferase (Latilactobacillus sakei subsp. sakei (strain 23K) (Lactobacillus sakei subsp. sakei)).